Consider the following 118-residue polypeptide: Large ribosomal subunit protein uL18 (118 aa).

It belongs to the universal ribosomal protein uL18 family. Part of the 50S ribosomal subunit; part of the 5S rRNA/L5/L18/L25 subcomplex. Contacts the 5S and 23S rRNAs.

This is one of the proteins that bind and probably mediate the attachment of the 5S RNA into the large ribosomal subunit, where it forms part of the central protuberance. The polypeptide is Large ribosomal subunit protein uL18 (Wolinella succinogenes (strain ATCC 29543 / DSM 1740 / CCUG 13145 / JCM 31913 / LMG 7466 / NCTC 11488 / FDC 602W) (Vibrio succinogenes)).